A 134-amino-acid chain; its full sequence is MIIGIGSDLIDIRRVEKSIERFGERFTHRCFTEVERARSDRRANRAASYAKRFAAKEACSKALGTGIAQGVFWKDMGVVNLPSGKPTMQLTGTAAVLLEAILPAGHRAAIHLTITDDYPLAQAFVIIEALPESP.

Positions 8 and 57 each coordinate Mg(2+).

Belongs to the P-Pant transferase superfamily. AcpS family. Requires Mg(2+) as cofactor.

The protein resides in the cytoplasm. The enzyme catalyses apo-[ACP] + CoA = holo-[ACP] + adenosine 3',5'-bisphosphate + H(+). In terms of biological role, transfers the 4'-phosphopantetheine moiety from coenzyme A to a Ser of acyl-carrier-protein. The sequence is that of Holo-[acyl-carrier-protein] synthase from Rhizobium etli (strain ATCC 51251 / DSM 11541 / JCM 21823 / NBRC 15573 / CFN 42).